Consider the following 1448-residue polypeptide: Sister chromatid cohesion protein PDS5 homolog B-A (1448 aa).

An HEAT repeat occupies 383-419 (LLVNDQLLNFVRERTLDKRWRVRKEAMMGLAQIYKKY). A compositionally biased stretch (polar residues) spans 1141–1155 (AGKQMLSKSSRMETV). Residues 1141–1448 (AGKQMLSKSS…TGRLRSAKKR (308 aa)) form a disordered region. The span at 1156–1168 (SNASSGSNPSSPG) shows a compositional bias: low complexity. Residues 1177–1186 (MELDQSENED) show a composition bias toward acidic residues. Basic and acidic residues-rich tracts occupy residues 1196-1214 (KKSD…LEKP), 1233-1243 (ELSKPAQEPKS), and 1264-1273 (WQEKRLKEDL). Over residues 1285-1294 (KKGRRGRPPK) the composition is skewed to basic residues. Positions 1286 to 1298 (KGRRGRPPKSAKM) form a DNA-binding region, a.T hook 1. Acidic residues predominate over residues 1324-1341 (PTDEDDHLEISEEQDFEN). Residues 1346–1356 (RKGRGSSRRTP) show a composition bias toward basic residues. DNA-binding regions (a.T hook) lie at residues 1374 to 1386 (QKRR…TPTV) and 1390 to 1402 (KSHV…VVSK). Over residues 1389–1399 (KKSHVGRPRKV) the composition is skewed to basic residues.

Belongs to the PDS5 family. As to quaternary structure, interacts with the cohesin complex. Post-translationally, phosphorylated in mitotic cells.

The protein localises to the nucleus. Plays a role in androgen-induced proliferative arrest. Required for maintenance of sister chromatid cohesion during mitosis. The polypeptide is Sister chromatid cohesion protein PDS5 homolog B-A (pds5b-a) (Xenopus laevis (African clawed frog)).